A 425-amino-acid chain; its full sequence is UDP-N-acetylglucosamine 1-carboxyvinyltransferase (425 aa).

22-23 contacts phosphoenolpyruvate; the sequence is KN. Residue arginine 98 coordinates UDP-N-acetyl-alpha-D-glucosamine. The Proton donor role is filled by cysteine 122. Cysteine 122 is modified (2-(S-cysteinyl)pyruvic acid O-phosphothioketal). UDP-N-acetyl-alpha-D-glucosamine-binding positions include 127–131, aspartate 313, and isoleucine 335; that span reads RPVDQ.

Belongs to the EPSP synthase family. MurA subfamily.

The protein localises to the cytoplasm. It catalyses the reaction phosphoenolpyruvate + UDP-N-acetyl-alpha-D-glucosamine = UDP-N-acetyl-3-O-(1-carboxyvinyl)-alpha-D-glucosamine + phosphate. Its pathway is cell wall biogenesis; peptidoglycan biosynthesis. Functionally, cell wall formation. Adds enolpyruvyl to UDP-N-acetylglucosamine. This is UDP-N-acetylglucosamine 1-carboxyvinyltransferase from Xylella fastidiosa (strain M23).